A 218-amino-acid chain; its full sequence is ATP phosphoribosyltransferase (218 aa).

It belongs to the ATP phosphoribosyltransferase family. Short subfamily. Heteromultimer composed of HisG and HisZ subunits.

It localises to the cytoplasm. The enzyme catalyses 1-(5-phospho-beta-D-ribosyl)-ATP + diphosphate = 5-phospho-alpha-D-ribose 1-diphosphate + ATP. It functions in the pathway amino-acid biosynthesis; L-histidine biosynthesis; L-histidine from 5-phospho-alpha-D-ribose 1-diphosphate: step 1/9. Functionally, catalyzes the condensation of ATP and 5-phosphoribose 1-diphosphate to form N'-(5'-phosphoribosyl)-ATP (PR-ATP). Has a crucial role in the pathway because the rate of histidine biosynthesis seems to be controlled primarily by regulation of HisG enzymatic activity. This is ATP phosphoribosyltransferase from Acaryochloris marina (strain MBIC 11017).